We begin with the raw amino-acid sequence, 165 residues long: RNA polymerase II transcriptional coactivator KELP (165 aa).

Positions 3-60 (KETKEKIEKTVIEILSESDMKEITEFKVRKLASEKLAIDLSEKSHKAFVRSVVEKFLD) constitute a DEK-C domain. A disordered region spans residues 66-93 (EYENSQVNKEEEDGDKDCGKGNKEFDDD).

It belongs to the transcriptional coactivator PC4 family.

The protein localises to the nucleus. General coactivator that functions cooperatively with TAFs and mediates functional interactions between upstream activators and the general transcriptional machinery. Binds single-stranded DNA. The chain is RNA polymerase II transcriptional coactivator KELP (KELP) from Arabidopsis thaliana (Mouse-ear cress).